Here is a 403-residue protein sequence, read N- to C-terminus: Tryptophan synthase beta chain (403 aa).

Lys-87 is subject to N6-(pyridoxal phosphate)lysine.

The protein belongs to the TrpB family. In terms of assembly, tetramer of two alpha and two beta chains. It depends on pyridoxal 5'-phosphate as a cofactor.

The catalysed reaction is (1S,2R)-1-C-(indol-3-yl)glycerol 3-phosphate + L-serine = D-glyceraldehyde 3-phosphate + L-tryptophan + H2O. It participates in amino-acid biosynthesis; L-tryptophan biosynthesis; L-tryptophan from chorismate: step 5/5. The beta subunit is responsible for the synthesis of L-tryptophan from indole and L-serine. This Shewanella loihica (strain ATCC BAA-1088 / PV-4) protein is Tryptophan synthase beta chain.